The chain runs to 469 residues: uncharacterized protein (469 aa).

Basic and acidic residues predominate over residues 152–161 (VREGKEEKKG). Positions 152 to 174 (VREGKEEKKGGPPGRGPPGWRRR) are disordered. Coiled-coil stretches lie at residues 346–375 (KAAL…RSES) and 423–453 (SDIT…KIKG).

This is an uncharacterized protein from Homo sapiens (Human).